The chain runs to 440 residues: Probable exopolygalacturonase C (440 aa).

Residues 1–21 form the signal peptide; it reads MLITNPALLGILASLVPLALG. N84 and N151 each carry an N-linked (GlcNAc...) asparagine glycan. PbH1 repeat units lie at residues 188 to 210, 217 to 238, and 240 to 261; these read GDDITVSHAIVDATSTGGFPFNT, GTNISITDSVMFNGDDAIAVNT, and SHNIVFARNTIGYQSHGMSIGS. N219 is a glycosylation site (N-linked (GlcNAc...) asparagine). D231 serves as the catalytic Proton donor. H255 is an active-site residue. The N-linked (GlcNAc...) asparagine glycan is linked to N271. The stretch at 272 to 293 is one PbH1 4 repeat; it reads ITNLRFEDVTVIDALYAARFKS. N313 carries N-linked (GlcNAc...) asparagine glycosylation. C389 and C395 form a disulfide bridge. An N-linked (GlcNAc...) asparagine glycan is attached at N434.

It belongs to the glycosyl hydrolase 28 family.

The protein localises to the secreted. The enzyme catalyses [(1-&gt;4)-alpha-D-galacturonosyl](n) + H2O = alpha-D-galacturonate + [(1-&gt;4)-alpha-D-galacturonosyl](n-1). Its function is as follows. Specific in hydrolyzing the terminal glycosidic bond of polygalacturonic acid and oligogalacturonates. This Aspergillus fumigatus (strain CBS 144.89 / FGSC A1163 / CEA10) (Neosartorya fumigata) protein is Probable exopolygalacturonase C (pgxC).